A 573-amino-acid chain; its full sequence is Sulfite reductase [NADPH] hemoprotein beta-component (573 aa).

Residues C438, C444, C483, and C487 each contribute to the [4Fe-4S] cluster site. C487 lines the siroheme pocket.

Belongs to the nitrite and sulfite reductase 4Fe-4S domain family. In terms of assembly, alpha(8)-beta(8). The alpha component is a flavoprotein, the beta component is a hemoprotein. It depends on siroheme as a cofactor. [4Fe-4S] cluster serves as cofactor.

The enzyme catalyses hydrogen sulfide + 3 NADP(+) + 3 H2O = sulfite + 3 NADPH + 4 H(+). The protein operates within sulfur metabolism; hydrogen sulfide biosynthesis; hydrogen sulfide from sulfite (NADPH route): step 1/1. In terms of biological role, component of the sulfite reductase complex that catalyzes the 6-electron reduction of sulfite to sulfide. This is one of several activities required for the biosynthesis of L-cysteine from sulfate. The protein is Sulfite reductase [NADPH] hemoprotein beta-component of Nitrosomonas eutropha (strain DSM 101675 / C91 / Nm57).